The chain runs to 139 residues: MSEEQQVVNLKKKEKWGVAHIYSSYNNTIIHITDLTGAETVSRWSGGMVVKADRDEPSPYAAMIAAKRAAEEAMEKGFVGVHIKVRAPGGSKSKTPGPGAQAAIRALARAGLRIGRVEDVTPIPHDGTRPKGGRRGRRV.

Residues 117-139 form a disordered region; that stretch reads VEDVTPIPHDGTRPKGGRRGRRV.

This sequence belongs to the universal ribosomal protein uS11 family. As to quaternary structure, part of the 30S ribosomal subunit.

Its function is as follows. Located on the platform of the 30S subunit. This chain is Small ribosomal subunit protein uS11, found in Thermococcus onnurineus (strain NA1).